The primary structure comprises 718 residues: Heat shock 70 kDa protein 6, chloroplastic (718 aa).

Residues 1–92 constitute a chloroplast transit peptide; the sequence is MASSAAQIHV…IDLGTTNSAV (92 aa). A disordered region spans residues 671 to 718; sequence QSLYNQPGAGGPGAGPSPGGEGASSGDSSSSKGGDGDDVIDADFTDSQ. Residues 678–693 are compositionally biased toward gly residues; that stretch reads GAGGPGAGPSPGGEGA. A compositionally biased stretch (acidic residues) spans 706–718; sequence GDDVIDADFTDSQ.

This sequence belongs to the heat shock protein 70 (TC 1.A.33) family. DnaK subfamily. As to quaternary structure, interacts with geminivirus movement protein (MP).

It is found in the plastid. Its subcellular location is the chloroplast stroma. In terms of biological role, acts redundantly with HSP70-7 in the thermotolerance of germinating seeds. Plays an important role in the protein precursor import into chloroplasts. Its function is as follows. In cooperation with other chaperones, Hsp70s are key components that facilitate folding of de novo synthesized proteins, assist translocation of precursor proteins into organelles, and are responsible for degradation of damaged protein under stress conditions. The sequence is that of Heat shock 70 kDa protein 6, chloroplastic (HSP70-6) from Arabidopsis thaliana (Mouse-ear cress).